The sequence spans 384 residues: Somatostatin receptor type 4 (384 aa).

Positions 1-34 (MNTPATLPLGGEDTTWTPGINASWAPDEEEDAVR) are disordered. Residues 1 to 41 (MNTPATLPLGGEDTTWTPGINASWAPDEEEDAVRSDGTGTA) are Extracellular-facing. N-linked (GlcNAc...) asparagine glycosylation occurs at Asn-21. The chain crosses the membrane as a helical span at residues 42-69 (GMVTIQCIYALVCLVGLVGNALVIFVIL). The Cytoplasmic segment spans residues 70 to 79 (RYAKMKTATN). The chain crosses the membrane as a helical span at residues 80 to 105 (IYLLNLAVADELFMLSVPFVASAAAL). The Extracellular segment spans residues 106 to 116 (RHWPFGAVLCR). A disulfide bridge connects residues Cys-115 and Cys-194. Residues 117 to 138 (AVLSVDGLNMFTSVFCLTVLSV) traverse the membrane as a helical segment. Over 139–160 (DRYVAVVHPLRAATYRRPSVAK) the chain is Cytoplasmic. A helical transmembrane segment spans residues 161 to 181 (LINLGVWLASLLVTLPIAVFA). At 182–203 (DTRPARGGEAVACNLHWPHPAW) the chain is on the extracellular side. A helical membrane pass occupies residues 204 to 228 (SAVFVIYTFLLGFLLPVLAIGLCYL). At 229–254 (LIVGKMRAVALRAGWQQRRRSEKKIT) the chain is on the cytoplasmic side. The helical transmembrane segment at 255-280 (RLVLMVVTVFVLCWMPFYVVQLLNLF) threads the bilayer. At 281-287 (VTSLDAT) the chain is on the extracellular side. The helical transmembrane segment at 288-311 (VNHVSLILSYANSCANPILYGFLS) threads the bilayer. Topologically, residues 312–384 (DNFRRSFQRV…RVPFTKTTTF (73 aa)) are cytoplasmic. A lipid anchor (S-palmitoyl cysteine) is attached at Cys-323.

This sequence belongs to the G-protein coupled receptor 1 family. Brain, lung, heart and islets. Moderate levels in the hippocampus, cortex and olfactory bulb.

The protein resides in the cell membrane. Its function is as follows. Receptor for somatostatin-14. The activity of this receptor is mediated by G proteins which inhibits adenylyl cyclase. It is functionally coupled not only to inhibition of adenylate cyclase, but also to activation of both arachidonate release and mitogen-activated protein (MAP) kinase cascade. The polypeptide is Somatostatin receptor type 4 (Sstr4) (Rattus norvegicus (Rat)).